The primary structure comprises 120 residues: Piercer of microtubule wall 2 protein (120 aa).

Positions 1-10 are enriched in basic and acidic residues; it reads MTECDWEKKS. The tract at residues 1–25 is disordered; that stretch reads MTECDWEKKSTSASNSDTEMKPELP.

The protein belongs to the PIERCE2 family. As to quaternary structure, microtubule inner protein component of sperm flagellar doublet microtubules. Interacts with CFAP53, ODAD1 and ODAD3; the interactions link the outer dynein arms docking complex (ODA-DC) to the internal microtubule inner proteins (MIP) in cilium axoneme. Expressed in trachea multiciliated cells.

The protein resides in the cytoplasm. It localises to the cytoskeleton. The protein localises to the cilium axoneme. It is found in the flagellum axoneme. In terms of biological role, microtubule inner protein involved in the attachment of outer dynein arms (ODAs) to dynein-decorated doublet microtubules (DMTs) in cilia axoneme, which is required for motile cilia beating. The sequence is that of Piercer of microtubule wall 2 protein (PIERCE2) from Bos taurus (Bovine).